A 222-amino-acid polypeptide reads, in one-letter code: MRAAVVVFPGSNCDRDLAVAFEQAGFDVSMVWHKDADLPQGIDIVGIPGGFSYGDYLRCGAIAAQSPICKAVVAHTARGGYALGVCNGFQVLTETGILPGALLRNAGLKYICKTVGLKVETSNSVFTEGYNAGDVIGIPIAHHDGNYYADDETLAALKAEDRIAFTYTDNPNGARDDIAGILSANRRVLGMMPHPERAADAGHGGTDGVALFRALAGALTPA.

The region spanning 3–222 (AAVVVFPGSN…RALAGALTPA (220 aa)) is the Glutamine amidotransferase type-1 domain. Cys86 serves as the catalytic Nucleophile. Catalysis depends on residues His194 and Glu196.

As to quaternary structure, part of the FGAM synthase complex composed of 1 PurL, 1 PurQ and 2 PurS subunits.

It is found in the cytoplasm. It carries out the reaction N(2)-formyl-N(1)-(5-phospho-beta-D-ribosyl)glycinamide + L-glutamine + ATP + H2O = 2-formamido-N(1)-(5-O-phospho-beta-D-ribosyl)acetamidine + L-glutamate + ADP + phosphate + H(+). It catalyses the reaction L-glutamine + H2O = L-glutamate + NH4(+). It participates in purine metabolism; IMP biosynthesis via de novo pathway; 5-amino-1-(5-phospho-D-ribosyl)imidazole from N(2)-formyl-N(1)-(5-phospho-D-ribosyl)glycinamide: step 1/2. In terms of biological role, part of the phosphoribosylformylglycinamidine synthase complex involved in the purines biosynthetic pathway. Catalyzes the ATP-dependent conversion of formylglycinamide ribonucleotide (FGAR) and glutamine to yield formylglycinamidine ribonucleotide (FGAM) and glutamate. The FGAM synthase complex is composed of three subunits. PurQ produces an ammonia molecule by converting glutamine to glutamate. PurL transfers the ammonia molecule to FGAR to form FGAM in an ATP-dependent manner. PurS interacts with PurQ and PurL and is thought to assist in the transfer of the ammonia molecule from PurQ to PurL. The sequence is that of Phosphoribosylformylglycinamidine synthase subunit PurQ from Ruegeria pomeroyi (strain ATCC 700808 / DSM 15171 / DSS-3) (Silicibacter pomeroyi).